Here is a 186-residue protein sequence, read N- to C-terminus: MVAAVATAWLLLWAAACAQSEQDFYDFKAVNIRGKLVSLEKYRGSVSLVVNVASECGFTDQNYRALQQLQRDLGPHHFNVLAFPCNQFGQQEPDTNREIENFARRTYSVSFPMFSKIAVTGTGAHPAFKYLTQTSGKEPTWNFWKYLVDPDGKVVGAWDPTVPVAEIKPRITEQVMKLILRKREDL.

A signal peptide spans 1–18 (MVAAVATAWLLLWAAACA). The active site involves Cys56.

The protein belongs to the glutathione peroxidase family.

It localises to the secreted. It carries out the reaction 2 glutathione + H2O2 = glutathione disulfide + 2 H2O. In terms of biological role, it protects esophageal epithelia from hydrogen peroxide-induced oxidative stress. It suppresses acidic bile acid-induced reactive oxygen species (ROS) and protects against oxidative DNA damage and double-strand breaks. This Mus musculus (Mouse) protein is Glutathione peroxidase 7 (Gpx7).